A 95-amino-acid polypeptide reads, in one-letter code: MKLNREDVLHIARLARLGLEEDEINRLSKELSALLEHFEVLQQVDTTGVEPTSQSTPVKSVLKEDIIKSSYAREDILSNAPRREGDYVRIRVVME.

It belongs to the GatC family. As to quaternary structure, heterotrimer of A, B and C subunits.

The enzyme catalyses L-glutamyl-tRNA(Gln) + L-glutamine + ATP + H2O = L-glutaminyl-tRNA(Gln) + L-glutamate + ADP + phosphate + H(+). It carries out the reaction L-aspartyl-tRNA(Asn) + L-glutamine + ATP + H2O = L-asparaginyl-tRNA(Asn) + L-glutamate + ADP + phosphate + 2 H(+). In terms of biological role, allows the formation of correctly charged Asn-tRNA(Asn) or Gln-tRNA(Gln) through the transamidation of misacylated Asp-tRNA(Asn) or Glu-tRNA(Gln) in organisms which lack either or both of asparaginyl-tRNA or glutaminyl-tRNA synthetases. The reaction takes place in the presence of glutamine and ATP through an activated phospho-Asp-tRNA(Asn) or phospho-Glu-tRNA(Gln). In Dehalococcoides mccartyi (strain CBDB1), this protein is Aspartyl/glutamyl-tRNA(Asn/Gln) amidotransferase subunit C.